Consider the following 29-residue polypeptide: Cytochrome b6-f complex subunit 8 (29 aa).

A helical transmembrane segment spans residues 3 to 23 (ILSISWAFLMVVFTFSLSLVV).

It belongs to the PetN family. In terms of assembly, the 4 large subunits of the cytochrome b6-f complex are cytochrome b6, subunit IV (17 kDa polypeptide, PetD), cytochrome f and the Rieske protein, while the 4 small subunits are PetG, PetL, PetM and PetN. The complex functions as a dimer.

The protein resides in the plastid. It localises to the chloroplast thylakoid membrane. Component of the cytochrome b6-f complex, which mediates electron transfer between photosystem II (PSII) and photosystem I (PSI), cyclic electron flow around PSI, and state transitions. The protein is Cytochrome b6-f complex subunit 8 of Chara vulgaris (Common stonewort).